We begin with the raw amino-acid sequence, 452 residues long: Tubulin alpha-1 chain (452 aa).

A GTP-binding site is contributed by Gln-11. An N6-acetyllysine modification is found at Lys-40. GTP is bound by residues Glu-71, Ser-140, Gly-144, Thr-145, Thr-179, Asn-206, and Asn-228. A Mg(2+)-binding site is contributed by Glu-71. Glu-254 is a catalytic residue. The segment at 433 to 452 (EEVGVDSADAEGEEEEGDEY) is disordered.

It belongs to the tubulin family. Dimer of alpha and beta chains. A typical microtubule is a hollow water-filled tube with an outer diameter of 25 nm and an inner diameter of 15 nM. Alpha-beta heterodimers associate head-to-tail to form protofilaments running lengthwise along the microtubule wall with the beta-tubulin subunit facing the microtubule plus end conferring a structural polarity. Microtubules usually have 13 protofilaments but different protofilament numbers can be found in some organisms and specialized cells. The cofactor is Mg(2+). Post-translationally, undergoes a tyrosination/detyrosination cycle, the cyclic removal and re-addition of a C-terminal tyrosine residue by the enzymes tubulin tyrosine carboxypeptidase (TTCP) and tubulin tyrosine ligase (TTL), respectively. Acetylation of alpha chains at Lys-40 stabilizes microtubules and affects affinity and processivity of microtubule motors. This modification has a role in multiple cellular functions, ranging from cell motility, cell cycle progression or cell differentiation to intracellular trafficking and signaling.

It localises to the cytoplasm. The protein localises to the cytoskeleton. The catalysed reaction is GTP + H2O = GDP + phosphate + H(+). Tubulin is the major constituent of microtubules, a cylinder consisting of laterally associated linear protofilaments composed of alpha- and beta-tubulin heterodimers. Microtubules grow by the addition of GTP-tubulin dimers to the microtubule end, where a stabilizing cap forms. Below the cap, tubulin dimers are in GDP-bound state, owing to GTPase activity of alpha-tubulin. This Paracentrotus lividus (Common sea urchin) protein is Tubulin alpha-1 chain.